The sequence spans 369 residues: Translocating chain-associated membrane protein 1-like 1 (369 aa).

The Cytoplasmic segment spans residues Met-1–Cys-29. The helical transmembrane segment at Val-30 to Phe-50 threads the bilayer. Residues Leu-51–Ala-81 are Lumenal-facing. The helical transmembrane segment at Thr-82 to Leu-102 threads the bilayer. The Cytoplasmic portion of the chain corresponds to Asp-103 to Glu-121. One can recognise a TLC domain in the interval Asn-117–Asp-326. The helical transmembrane segment at Ser-122 to Ser-142 threads the bilayer. The Lumenal segment spans residues Glu-143–Gln-164. A helical membrane pass occupies residues Met-165 to Phe-185. Residues Gln-186–Gln-196 lie on the Cytoplasmic side of the membrane. Residues Leu-197–Leu-215 traverse the membrane as a helical segment. Over Asn-216–Gly-219 the chain is Lumenal. The chain crosses the membrane as a helical span at residues Leu-220–Ser-242. The Cytoplasmic portion of the chain corresponds to Asp-243–Gly-249. The helical transmembrane segment at Ile-250–Leu-270 threads the bilayer. At Thr-271–Lys-297 the chain is on the lumenal side. A helical transmembrane segment spans residues Ile-298–Leu-318. The Cytoplasmic segment spans residues Trp-319 to Ser-369. The tract at residues Lys-335 to Ser-369 is disordered. Positions Cys-360–Ser-369 are enriched in basic and acidic residues.

The protein belongs to the TRAM family.

It is found in the endoplasmic reticulum membrane. Its function is as follows. Stimulatory or required for the translocation of secretory proteins across the ER membrane. This chain is Translocating chain-associated membrane protein 1-like 1 (TRAM1L1), found in Homo sapiens (Human).